An 86-amino-acid polypeptide reads, in one-letter code: Latartoxin-1b (86 aa).

Positions 1–19 are cleaved as a signal peptide; sequence MKILVLAVVCTVLLQVALS. The propeptide at 20–26 is removed in mature form; that stretch reads ADSEEVR. The short motif at 23 to 26 is the Processing quadruplet motif element; the sequence is EEVR. Intrachain disulfides connect Cys-28/Cys-43, Cys-35/Cys-48, Cys-42/Cys-65, and Cys-50/Cys-63.

The protein belongs to the neurotoxin 19 (CSTX) family. In terms of processing, contains 4 disulfide bonds. Cleavage of the propeptide depends on the processing quadruplet motif (XXXR, with at least one of X being E). In terms of tissue distribution, expressed by the venom gland.

It is found in the secreted. Its function is as follows. Insect toxin. The polypeptide is Latartoxin-1b (Lachesana tarabaevi (Spider)).